Reading from the N-terminus, the 81-residue chain is Delta-actitoxin-Aeq2d (81 aa).

The N-terminal stretch at 1 to 19 is a signal peptide; that stretch reads MNRLMILVFAAVILALASA. Residues 20–25 constitute a propeptide that is removed on maturation; that stretch reads DDVDIA. 3 disulfide bridges follow: Cys31–Cys78, Cys33–Cys68, and Cys61–Cys79.

It belongs to the sea anemone sodium channel inhibitory toxin family. Type I subfamily.

It is found in the secreted. The protein localises to the nematocyst. Functionally, binds specifically to voltage-gated sodium channels (Nav), thereby delaying their inactivation during signal transduction. Causes death to crabs. The sequence is that of Delta-actitoxin-Aeq2d from Actinia equina (Beadlet anemone).